The sequence spans 223 residues: Germin-like protein 1-3 (223 aa).

Positions 1–22 (MAKLILATFAVVFMALAATSLA) are cleaved as a signal peptide. A disulfide bridge links Cys32 with Cys50. Asn55 carries an N-linked (GlcNAc...) asparagine glycan. A Cupin type-1 domain is found at 64 to 212 (DGLMKAGNTG…AFQVDGGMVE (149 aa)). His112, His114, Glu119, and His158 together coordinate Mn(2+).

Belongs to the germin family. In terms of assembly, oligomer (believed to be a pentamer but probably hexamer).

It is found in the secreted. The protein localises to the extracellular space. Its subcellular location is the apoplast. Functionally, may play a role in plant defense. Probably has no oxalate oxidase activity even if the active site is conserved. This Oryza sativa subsp. japonica (Rice) protein is Germin-like protein 1-3 (GER8).